The following is a 66-amino-acid chain: Toxin Tppa2 (66 aa).

In terms of domain architecture, LCN-type CS-alpha/beta spans 1-63 (KDGYLVGNDG…TWSRATNKCG (63 aa)). 4 cysteine pairs are disulfide-bonded: C11–C62, C15–C37, C23–C43, and C27–C45. C62 is subject to Cysteine amide.

This sequence belongs to the long (4 C-C) scorpion toxin superfamily. Sodium channel inhibitor family. Beta subfamily. Expressed by the venom gland.

The protein resides in the secreted. Functionally, beta toxins bind voltage-independently at site-4 of sodium channels (Nav) and shift the voltage of activation toward more negative potentials thereby affecting sodium channel activation and promoting spontaneous and repetitive firing. The protein is Toxin Tppa2 of Tityus pachyurus (Colombian scorpion).